We begin with the raw amino-acid sequence, 215 residues long: HTH-type transcriptional repressor FabR (215 aa).

Positions 10–70 (KTRRSLVEAA…TMVDESGLML (61 aa)) constitute an HTH tetR-type domain. The H-T-H motif DNA-binding region spans 33–52 (SLREVAREAGIAPTSFYRHF).

In terms of assembly, homodimer.

The protein localises to the cytoplasm. Its function is as follows. Represses the transcription of fabB, involved in unsaturated fatty acid (UFA) biosynthesis. By controlling UFA production, FabR directly influences the physical properties of the membrane bilayer. The chain is HTH-type transcriptional repressor FabR from Escherichia coli O139:H28 (strain E24377A / ETEC).